The sequence spans 324 residues: NADH-ubiquinone oxidoreductase chain 1 (324 aa).

A run of 9 helical transmembrane segments spans residues 9–29 (IINPLAYIVPVLLAVAFLTLL), 43–63 (PNIVGPYGLLQPIADGLKLFI), 75–95 (FLFLATPMLALTLALTLWAPM), 106–126 (LGVLFVLALSSLAVYSILGSG), 146–166 (ISYEVSLGLILLSVIIFTGGF), 177–197 (SIWLLVPAWPLAAMWYISTLA), 237–257 (ILLMNTLSAILFLGASHIPAF), 259–279 (ELTAVNLMTKAALLSVVFLWV), and 299–319 (FLPLTLALVLWHLALPTAMAG).

It belongs to the complex I subunit 1 family.

It localises to the mitochondrion inner membrane. The catalysed reaction is a ubiquinone + NADH + 5 H(+)(in) = a ubiquinol + NAD(+) + 4 H(+)(out). In terms of biological role, core subunit of the mitochondrial membrane respiratory chain NADH dehydrogenase (Complex I) that is believed to belong to the minimal assembly required for catalysis. Complex I functions in the transfer of electrons from NADH to the respiratory chain. The immediate electron acceptor for the enzyme is believed to be ubiquinone. The sequence is that of NADH-ubiquinone oxidoreductase chain 1 (MT-ND1) from Salmo salar (Atlantic salmon).